Reading from the N-terminus, the 90-residue chain is uncharacterized protein (90 aa).

Helical transmembrane passes span I17–V37 and I55–A75.

It is found in the membrane. This is an uncharacterized protein from Schizosaccharomyces pombe (strain 972 / ATCC 24843) (Fission yeast).